Reading from the N-terminus, the 162-residue chain is UPF0262 protein Pden_1958 (162 aa).

The interval Met-1–Ser-22 is disordered.

The protein belongs to the UPF0262 family.

This Paracoccus denitrificans (strain Pd 1222) protein is UPF0262 protein Pden_1958.